A 116-amino-acid chain; its full sequence is TSGKAAKKAGKAQKSITKGDKKKRKESYSIYIYKVLKQVHPDTGISSKAMSIMNSFVNDIFERIAAEASRLAHYNKRSTITSREIQTAVRLLLPGELAKHAVSEGTKAVTKYTSSK.

A compositionally biased stretch (basic residues) spans 1 to 11 (TSGKAAKKAGK). A disordered region spans residues 1 to 25 (TSGKAAKKAGKAQKSITKGDKKKRK). An N6-acetyllysine mark is found at Lys4, Lys11, and Lys14. A glycan (O-linked (GlcNAc) serine) is linked at Ser103. A Glycyl lysine isopeptide (Lys-Gly) (interchain with G-Cter in ubiquitin) cross-link involves residue Lys111.

The nucleosome is a histone octamer containing two molecules each of H2A, H2B, H3 and H4 assembled in one H3-H4 heterotetramer and two H2A-H2B heterodimers. The octamer wraps approximately 147 bp of DNA. Post-translationally, monoubiquitination gives a specific tag for epigenetic transcriptional activation and is also prerequisite for histone H3 'Lys-4' and 'Lys-79' methylation. GlcNAcylation at Ser-103 promotes monoubiquitination of Lys-111. It fluctuates in response to extracellular glucose, and associates with transcribed genes.

The protein localises to the nucleus. It is found in the chromosome. Functionally, core component of nucleosome. Nucleosomes wrap and compact DNA into chromatin, limiting DNA accessibility to the cellular machineries which require DNA as a template. Histones thereby play a central role in transcription regulation, DNA repair, DNA replication and chromosomal stability. DNA accessibility is regulated via a complex set of post-translational modifications of histones, also called histone code, and nucleosome remodeling. A mixture of histones H2B and H4 has antimicrobial activity against the Gram-positive bacterium M.luteus. In Penaeus vannamei (Whiteleg shrimp), this protein is Histone H2B.